The sequence spans 358 residues: 3-dehydroquinate synthase (358 aa).

NAD(+) is bound by residues 72 to 77, 106 to 110, 130 to 131, lysine 143, and lysine 151; these read GGERVK, GALLD, and ST. Zn(2+) is bound by residues glutamate 184, histidine 245, and histidine 261.

This sequence belongs to the sugar phosphate cyclases superfamily. Dehydroquinate synthase family. It depends on NAD(+) as a cofactor. Co(2+) serves as cofactor. The cofactor is Zn(2+).

Its subcellular location is the cytoplasm. It carries out the reaction 7-phospho-2-dehydro-3-deoxy-D-arabino-heptonate = 3-dehydroquinate + phosphate. It participates in metabolic intermediate biosynthesis; chorismate biosynthesis; chorismate from D-erythrose 4-phosphate and phosphoenolpyruvate: step 2/7. Catalyzes the conversion of 3-deoxy-D-arabino-heptulosonate 7-phosphate (DAHP) to dehydroquinate (DHQ). This Aeropyrum pernix (strain ATCC 700893 / DSM 11879 / JCM 9820 / NBRC 100138 / K1) protein is 3-dehydroquinate synthase (aroB).